The primary structure comprises 84 residues: Large ribosomal subunit protein bL27 (84 aa).

Positions 1-25 are disordered; that stretch reads MAHKKGQGSTQNNRDSAGRRLGVKK.

Belongs to the bacterial ribosomal protein bL27 family.

The chain is Large ribosomal subunit protein bL27 from Sulfurovum sp. (strain NBC37-1).